Consider the following 695-residue polypeptide: F-box only protein 34 (695 aa).

Disordered regions lie at residues 239 to 275 (GQSRGIPPAPEPFSAPETCEEPKEQENPETGRSQGEP), 316 to 373 (LTNG…CPSL), and 472 to 524 (GQDQ…PGGS). Residues 556–608 (QQYMACLPHHIIVKIFRLLPTLSLAILKCTCRYFKSIIEYYNIRPADSRWVRD) enclose the F-box domain.

Directly interacts with SKP1 and CUL1.

Its function is as follows. Substrate-recognition component of the SCF (SKP1-CUL1-F-box protein)-type E3 ubiquitin ligase complex. In Mus musculus (Mouse), this protein is F-box only protein 34 (Fbxo34).